A 425-amino-acid polypeptide reads, in one-letter code: UPF0229 protein ETA_15540 (425 aa).

The segment at 60 to 111 (NEPSFHQGRGGERYRVHPGNDHFVQNDRVDRPQGGGAGGSGQGNAGKDGEGQ) is disordered. The span at 68–90 (RGGERYRVHPGNDHFVQNDRVDR) shows a compositional bias: basic and acidic residues. Gly residues predominate over residues 92-105 (QGGGAGGSGQGNAG).

It belongs to the UPF0229 family.

This chain is UPF0229 protein ETA_15540, found in Erwinia tasmaniensis (strain DSM 17950 / CFBP 7177 / CIP 109463 / NCPPB 4357 / Et1/99).